A 145-amino-acid chain; its full sequence is D-aminoacyl-tRNA deacylase (145 aa).

The Gly-cisPro motif, important for rejection of L-amino acids motif lies at 137–138 (GP).

The protein belongs to the DTD family. In terms of assembly, homodimer.

The protein localises to the cytoplasm. The catalysed reaction is glycyl-tRNA(Ala) + H2O = tRNA(Ala) + glycine + H(+). It catalyses the reaction a D-aminoacyl-tRNA + H2O = a tRNA + a D-alpha-amino acid + H(+). An aminoacyl-tRNA editing enzyme that deacylates mischarged D-aminoacyl-tRNAs. Also deacylates mischarged glycyl-tRNA(Ala), protecting cells against glycine mischarging by AlaRS. Acts via tRNA-based rather than protein-based catalysis; rejects L-amino acids rather than detecting D-amino acids in the active site. By recycling D-aminoacyl-tRNA to D-amino acids and free tRNA molecules, this enzyme counteracts the toxicity associated with the formation of D-aminoacyl-tRNA entities in vivo and helps enforce protein L-homochirality. The protein is D-aminoacyl-tRNA deacylase of Rhodococcus opacus (strain B4).